Here is a 428-residue protein sequence, read N- to C-terminus: Glutamate-1-semialdehyde 2,1-aminomutase (428 aa).

Lys265 is modified (N6-(pyridoxal phosphate)lysine).

This sequence belongs to the class-III pyridoxal-phosphate-dependent aminotransferase family. HemL subfamily. In terms of assembly, homodimer. It depends on pyridoxal 5'-phosphate as a cofactor.

The protein resides in the cytoplasm. It catalyses the reaction (S)-4-amino-5-oxopentanoate = 5-aminolevulinate. The protein operates within porphyrin-containing compound metabolism; protoporphyrin-IX biosynthesis; 5-aminolevulinate from L-glutamyl-tRNA(Glu): step 2/2. In Shewanella frigidimarina (strain NCIMB 400), this protein is Glutamate-1-semialdehyde 2,1-aminomutase.